The following is a 222-amino-acid chain: MSGLGRLFGKGKKEKGPTPEEAIQKLKETEKILIKKQEFLEQKIQQELQTAKKYGTKNKRAALQALRRKKRFEQQLAQTDGTLSTLEFQREAIENATTNAEVLRTMELAAQSMKKAYQDMDIDKVDELMTDITEQQEVAQQISDAISRPMGFGDDVDEDELLEELEELEQEELAQELLNVGDKEEEPSVKLPSVPSTHLPAGPAPKVDEDEEALKQLAEWVS.

Disordered regions lie at residues 1–21 (MSGL…TPEE) and 180–211 (VGDK…DEDE). The interval 1-116 (MSGLGRLFGK…ELAAQSMKKA (116 aa)) is interaction with phosphoinosides. The intramolecular interaction with C-terminus stretch occupies residues 1–150 (MSGLGRLFGK…QISDAISRPM (150 aa)). 2 coiled-coil regions span residues 20–105 (EEAI…VLRT) and 155–180 (DVDE…LLNV). The tract at residues 151–222 (GFGDDVDEDE…ALKQLAEWVS (72 aa)) is intramolecular interaction with N-terminus. Phosphoserine is present on Ser196.

The protein belongs to the SNF7 family. In terms of assembly, probable core component of the endosomal sorting required for transport complex III (ESCRT-III). ESCRT-III components are thought to multimerize to form a flat lattice on the perimeter membrane of the endosome. Several assembly forms of ESCRT-III may exist that interact and act sequentially. Self-associates; overexpression leads to the assembly of filaments that curve and associate to create circular rings. Interacts with CHMP2A. Interacts with CHMP3; the interaction requires the release of CHMP4A autoinhibition. Interacts with CHMP4B. Interacts with CHMP4C. Interacts with CHMP6. Interacts with VPS4A. Interacts with PDCD6IP; the interaction is direct. In terms of tissue distribution, widely expressed. Expressed at higher level in heart, kidney, liver and skeletal muscle. Also expressed in brain, placenta, lung and pancreas.

The protein resides in the cytoplasmic vesicle membrane. It localises to the late endosome membrane. In terms of biological role, probable core component of the endosomal sorting required for transport complex III (ESCRT-III) which is involved in multivesicular bodies (MVBs) formation and sorting of endosomal cargo proteins into MVBs. MVBs contain intraluminal vesicles (ILVs) that are generated by invagination and scission from the limiting membrane of the endosome and mostly are delivered to lysosomes enabling degradation of membrane proteins, such as stimulated growth factor receptors, lysosomal enzymes and lipids. The MVB pathway appears to require the sequential function of ESCRT-O, -I,-II and -III complexes. ESCRT-III proteins mostly dissociate from the invaginating membrane before the ILV is released. The ESCRT machinery also functions in topologically equivalent membrane fission events, such as the terminal stages of cytokinesis and the budding of enveloped viruses (HIV-1 and other lentiviruses). ESCRT-III proteins are believed to mediate the necessary vesicle extrusion and/or membrane fission activities, possibly in conjunction with the AAA ATPase VPS4. When overexpressed, membrane-assembled circular arrays of CHMP4A filaments can promote or stabilize negative curvature and outward budding. Via its interaction with PDCD6IP involved in HIV-1 p6- and p9-dependent virus release. CHMP4A/B/C are required for the exosomal release of SDCBP, CD63 and syndecan. The sequence is that of Charged multivesicular body protein 4a (CHMP4A) from Homo sapiens (Human).